We begin with the raw amino-acid sequence, 445 residues long: FAS-associated factor 2 (445 aa).

Alanine 2 bears the N-acetylalanine mark. The UBA domain maps to 12 to 48 (EQTEKLLQFQDLTGIESMEQCRLALEQHNWNMEAAVQ). Lysine 167 bears the N6-acetyllysine mark. Residues 275 to 350 (SERLEREERN…EEKERKLECL (76 aa)) adopt a coiled-coil conformation. The segment at 300–361 (SLRADQEKER…PEPSPDDPES (62 aa)) is disordered. Positions 303–348 (ADQEKERKKREEKERKRRKEEEVQQQKLAEERRRQNLQEEKERKLE) are enriched in basic and acidic residues. The 83-residue stretch at 357 to 439 (DDPESVKIIF…GLSHTEVLFV (83 aa)) folds into the UBX domain.

Identified in a complex that contains SEL1L, OS9, FAF2/UBXD8, UBE2J1/UBC6E and AUP1. Interacts with YOD1. Interacts (via N-terminus) with UBQLN2 (via C-terminus). Interacts with PNPLA2. Interacts with ZFAND2B; probably through VCP. Interacts with LMBR1L and UBAC2.

It localises to the cytoplasm. Its subcellular location is the lipid droplet. The protein localises to the endoplasmic reticulum. In terms of biological role, plays an important role in endoplasmic reticulum-associated degradation (ERAD) that mediates ubiquitin-dependent degradation of misfolded endoplasmic reticulum proteins. By controlling the steady-state expression of the IGF1R receptor, indirectly regulates the insulin-like growth factor receptor signaling pathway. Involved in inhibition of lipid droplet degradation by binding to phospholipase PNPL2 and inhibiting its activity by promoting dissociation of PNPL2 from its endogenous activator, ABHD5 which inhibits the rate of triacylglycerol hydrolysis. Involved in stress granule disassembly: associates with ubiquitinated G3BP1 in response to heat shock, thereby promoting interaction between ubiquitinated G3BP1 and VCP, followed by G3BP1 extraction from stress granules and stress granule disassembly. The chain is FAS-associated factor 2 (Faf2) from Mus musculus (Mouse).